The chain runs to 456 residues: N(6)-adenosine-methyltransferase non-catalytic subunit METTL14 (456 aa).

Residues 50-75 form a disordered region; that stretch reads TCRASYDTSAPNAKRKYLDEGETDED. 2 interaction with METTL3 regions span residues 135–136 and 237–238; these read RD and SG. The positively charged region required for RNA-binding stretch occupies residues 245 to 254; the sequence is RVCLRKWGYR. 2 interaction with METTL3 regions span residues 255-258 and 278-287; these read RCED and KAVFQRTKEH. Residues 297–298 are positively charged region required for RNA-binding; that stretch reads KR. An interaction with METTL3 region spans residues 308 to 312; that stretch reads NVDID. The segment at 393-456 is disordered; that stretch reads ERLRPKSPPP…GAHRGGFPPR (64 aa). Ser-399 bears the Phosphoserine mark. Residues 409–423 are compositionally biased toward gly residues; that stretch reads GGGAPRGGGRGGTSA. The segment covering 425-440 has biased composition (basic and acidic residues); that stretch reads RGRERNRSNFRGERGG. The segment covering 441-450 has biased composition (gly residues); it reads FRGGRGGAHR.

This sequence belongs to the MT-A70-like family. As to quaternary structure, heterodimer; heterodimerizes with METTL3 to form an antiparallel heterodimer that constitutes an active methyltransferase. Component of the WMM complex, a N6-methyltransferase complex composed of a catalytic subcomplex, named MAC, and of an associated subcomplex, named MACOM. The MAC subcomplex is composed of METTL3 and METTL14. The MACOM subcomplex is composed of WTAP, ZC3H13, CBLL1/HAKAI, VIRMA, and, in some cases of RBM15 (RBM15 or RBM15B).

It is found in the nucleus. Functionally, the METTL3-METTL14 heterodimer forms a N6-methyltransferase complex that methylates adenosine residues at the N(6) position of some mRNAs and regulates the circadian clock, differentiation of embryonic stem cells and cortical neurogenesis. In the heterodimer formed with METTL3, METTL14 constitutes the RNA-binding scaffold that recognizes the substrate rather than the catalytic core. N6-methyladenosine (m6A), which takes place at the 5'-[AG]GAC-3' consensus sites of some mRNAs, plays a role in mRNA stability and processing. M6A acts as a key regulator of mRNA stability by promoting mRNA destabilization and degradation. In embryonic stem cells (ESCs), m6A methylation of mRNAs encoding key naive pluripotency-promoting transcripts results in transcript destabilization. M6A regulates spermatogonial differentiation and meiosis and is essential for male fertility and spermatogenesis. M6A also regulates cortical neurogenesis: m6A methylation of transcripts related to transcription factors, neural stem cells, the cell cycle and neuronal differentiation during brain development promotes their destabilization and decay, promoting differentiation of radial glial cells. The polypeptide is N(6)-adenosine-methyltransferase non-catalytic subunit METTL14 (Homo sapiens (Human)).